Here is a 282-residue protein sequence, read N- to C-terminus: MLDSHQPKQTQRVALVVQYLGTHFHGWQRQKQHRTVQEEIETAIAKILGHHVTLHGAGRTDSGVHAAAQVAHFDATGLIPAHKWASVINSYLPKDILIKASAAVGDRWHARFSAAYRRYRYTIYTEDRPNLFVTPFSWHYYYAPLDESLMQAALKPLMGKHHLAAFHRAGSKRSHSWVEVQAVECHRSGPFIHIEIQADGFLYGMVRLLVGMLVQVGSGQRTLANFTELWKEQRREEVKHAAPSQGLCLLRVGYPDFPFTPDVWYDTMPKLVFSQESLVNSH.

D61 acts as the Nucleophile in catalysis. A substrate-binding site is contributed by Y119.

This sequence belongs to the tRNA pseudouridine synthase TruA family. In terms of assembly, homodimer.

The enzyme catalyses uridine(38/39/40) in tRNA = pseudouridine(38/39/40) in tRNA. Functionally, formation of pseudouridine at positions 38, 39 and 40 in the anticodon stem and loop of transfer RNAs. The chain is tRNA pseudouridine synthase A from Nostoc sp. (strain PCC 7120 / SAG 25.82 / UTEX 2576).